The chain runs to 334 residues: Heat-inducible transcription repressor HrcA (334 aa).

Belongs to the HrcA family.

Its function is as follows. Negative regulator of class I heat shock genes (grpE-dnaK-dnaJ and groELS operons). Prevents heat-shock induction of these operons. This is Heat-inducible transcription repressor HrcA from Bordetella bronchiseptica (strain ATCC BAA-588 / NCTC 13252 / RB50) (Alcaligenes bronchisepticus).